Consider the following 508-residue polypeptide: 3-octaprenyl-4-hydroxybenzoate carboxy-lyase (508 aa).

Residue asparagine 178 coordinates Mn(2+). Residues 181–183 (IYR), 195–197 (RWL), and 200–201 (RG) contribute to the prenylated FMN site. Mn(2+) is bound at residue glutamate 244. The Proton donor role is filled by aspartate 303.

It belongs to the UbiD family. As to quaternary structure, homohexamer. Prenylated FMN is required as a cofactor. Requires Mn(2+) as cofactor.

The protein resides in the cell membrane. It carries out the reaction a 4-hydroxy-3-(all-trans-polyprenyl)benzoate + H(+) = a 2-(all-trans-polyprenyl)phenol + CO2. It participates in cofactor biosynthesis; ubiquinone biosynthesis. In terms of biological role, catalyzes the decarboxylation of 3-octaprenyl-4-hydroxy benzoate to 2-octaprenylphenol, an intermediate step in ubiquinone biosynthesis. The polypeptide is 3-octaprenyl-4-hydroxybenzoate carboxy-lyase (Cupriavidus taiwanensis (strain DSM 17343 / BCRC 17206 / CCUG 44338 / CIP 107171 / LMG 19424 / R1) (Ralstonia taiwanensis (strain LMG 19424))).